Consider the following 46-residue polypeptide: Protein PsbN (46 aa).

The chain crosses the membrane as a helical span at residues 5-27 (TLVTLFVSGLLMSFTGYALYTAF).

Belongs to the PsbN family.

It is found in the plastid membrane. May play a role in photosystem I and II biogenesis. The sequence is that of Protein PsbN from Cuscuta obtusiflora (Peruvian dodder).